The sequence spans 392 residues: Formate-dependent phosphoribosylglycinamide formyltransferase (392 aa).

N(1)-(5-phospho-beta-D-ribosyl)glycinamide is bound by residues 22-23 (EL) and Glu82. ATP-binding positions include Arg114, Lys155, 160-165 (SSGKGQ), 195-198 (EGVV), and Glu203. The 190-residue stretch at 119-308 (RLAAEELQLP…EFALHVRAFL (190 aa)) folds into the ATP-grasp domain. Residues Glu267 and Glu279 each contribute to the Mg(2+) site. Residues Asp286, Lys355, and 362-363 (RR) each bind N(1)-(5-phospho-beta-D-ribosyl)glycinamide.

It belongs to the PurK/PurT family. Homodimer.

It catalyses the reaction N(1)-(5-phospho-beta-D-ribosyl)glycinamide + formate + ATP = N(2)-formyl-N(1)-(5-phospho-beta-D-ribosyl)glycinamide + ADP + phosphate + H(+). It functions in the pathway purine metabolism; IMP biosynthesis via de novo pathway; N(2)-formyl-N(1)-(5-phospho-D-ribosyl)glycinamide from N(1)-(5-phospho-D-ribosyl)glycinamide (formate route): step 1/1. In terms of biological role, involved in the de novo purine biosynthesis. Catalyzes the transfer of formate to 5-phospho-ribosyl-glycinamide (GAR), producing 5-phospho-ribosyl-N-formylglycinamide (FGAR). Formate is provided by PurU via hydrolysis of 10-formyl-tetrahydrofolate. The chain is Formate-dependent phosphoribosylglycinamide formyltransferase from Shigella sonnei (strain Ss046).